The primary structure comprises 544 residues: pH-responsive protein 2 (544 aa).

Residues 1–22 (MLLKSLFPSILAATSFVSSVAA) form the signal peptide. N-linked (GlcNAc...) asparagine glycosylation is found at asparagine 40 and asparagine 59. A disulfide bridge connects residues cysteine 72 and cysteine 101. The N-linked (GlcNAc...) asparagine glycan is linked to asparagine 147. Intrachain disulfides connect cysteine 214–cysteine 347, cysteine 232–cysteine 263, cysteine 369–cysteine 420, cysteine 378–cysteine 444, and cysteine 397–cysteine 402. Asparagine 408 is a glycosylation site (N-linked (GlcNAc...) asparagine). Positions 469–514 (GSSGLGTVSGTVRTDTSQSTSDSGSGSSSSSSSSSSSSSSGSSGSK) are disordered. Serine 515 carries GPI-anchor amidated serine lipidation. The propeptide at 516-544 (AASIVSVNLLTKIATIGISIVVGFGLITM) is removed in mature form.

Belongs to the glycosyl hydrolase 72 family.

It is found in the cell membrane. Functionally, required for apical cell growth and plays an essential role in morphogenesis. May be integral to the pathogenic ability of the organism. The protein is pH-responsive protein 2 (PHR2) of Candida albicans (strain SC5314 / ATCC MYA-2876) (Yeast).